The sequence spans 99 residues: Defensin-like protein 2 (99 aa).

The signal sequence occupies residues 1-30 (MAMAKKSVSSFTLIFILVLVIFEVPEIKAQ). 4 disulfides stabilise this stretch: C34–C86, C47–C71, C56–C81, and C60–C83. Residues 94–99 (ILRGGI) constitute a propeptide that is removed on maturation.

Belongs to the DEFL family. Protease inhibitor I18 (RTI/MTI-2) subfamily.

The protein localises to the secreted. Inhibits bovine beta-trypsin and alpha-chymotrypsin on a 1:1 molar basis. This Sinapis alba (White mustard) protein is Defensin-like protein 2.